A 401-amino-acid polypeptide reads, in one-letter code: MNEVVIPSVLQDGSVRTPEPRKQNLLDLDREGLERFFADTLGEARYRAHQVMKWIHHRYVTDFDQMTDLGKALRAKLHQHAEVLVPNVVFDKPSADGTHKWLLAMGTDGKNAIETVYIPDKGRGTLCVSSQVGCGLNCSFCSTATQGFNRNLTTAEIIGQVWVAARHLGNVPHQQRRLTNVVMMGMGEPLMNFDNVVRAMSVMRDDLGYGLASKRVTLSTSGLVPMIDRLSTESDVSLAVSLHAANDALRESLVPLNKKYPIAELMESCARYLRGSKKRDSVTFEYTLMKGINDQPEHARQLARLMRQFDNAVQSKDAGKVNLIPFNPFPGTRYERSGETEIRAFQKILLDAQVLTMVRRTRGDDIDAACGQLKGQVMDRTRRQAEFRRTLEGQADRDAAA.

The active-site Proton acceptor is the glutamate 114. The region spanning 120–365 is the Radical SAM core domain; sequence DKGRGTLCVS…TMVRRTRGDD (246 aa). Residues cysteine 127 and cysteine 370 are joined by a disulfide bond. [4Fe-4S] cluster is bound by residues cysteine 134, cysteine 138, and cysteine 141. Residues 187–188, serine 219, 241–243, and asparagine 327 each bind S-adenosyl-L-methionine; these read GE and SLH. The active-site S-methylcysteine intermediate is the cysteine 370.

The protein belongs to the radical SAM superfamily. RlmN family. [4Fe-4S] cluster is required as a cofactor.

It is found in the cytoplasm. It catalyses the reaction adenosine(2503) in 23S rRNA + 2 reduced [2Fe-2S]-[ferredoxin] + 2 S-adenosyl-L-methionine = 2-methyladenosine(2503) in 23S rRNA + 5'-deoxyadenosine + L-methionine + 2 oxidized [2Fe-2S]-[ferredoxin] + S-adenosyl-L-homocysteine. It carries out the reaction adenosine(37) in tRNA + 2 reduced [2Fe-2S]-[ferredoxin] + 2 S-adenosyl-L-methionine = 2-methyladenosine(37) in tRNA + 5'-deoxyadenosine + L-methionine + 2 oxidized [2Fe-2S]-[ferredoxin] + S-adenosyl-L-homocysteine. Its function is as follows. Specifically methylates position 2 of adenine 2503 in 23S rRNA and position 2 of adenine 37 in tRNAs. m2A2503 modification seems to play a crucial role in the proofreading step occurring at the peptidyl transferase center and thus would serve to optimize ribosomal fidelity. This Xanthomonas axonopodis pv. citri (strain 306) protein is Dual-specificity RNA methyltransferase RlmN.